Consider the following 261-residue polypeptide: Probable 6-phosphogluconolactonase 4 (261 aa).

Belongs to the glucosamine/galactosamine-6-phosphate isomerase family. 6-phosphogluconolactonase subfamily.

The protein resides in the cytoplasm. It is found in the cytosol. The catalysed reaction is 6-phospho-D-glucono-1,5-lactone + H2O = 6-phospho-D-gluconate + H(+). It participates in carbohydrate degradation; pentose phosphate pathway; D-ribulose 5-phosphate from D-glucose 6-phosphate (oxidative stage): step 2/3. Its function is as follows. Catalyzes the hydrolysis of 6-phosphogluconolactone to 6-phosphogluconate. This Arabidopsis thaliana (Mouse-ear cress) protein is Probable 6-phosphogluconolactonase 4.